Consider the following 405-residue polypeptide: Methylamine dehydrogenase heavy chain (405 aa).

The first 36 residues, 1–36, serve as a signal peptide directing secretion; that stretch reads MTTFDHPSMIRQPKPTGLAGGLVLAALMLSSSLALA.

This sequence belongs to the aromatic amine dehydrogenase heavy chain family. Tetramer of two light and two heavy chains.

It localises to the periplasm. It carries out the reaction 2 oxidized [amicyanin] + methylamine + H2O = 2 reduced [amicyanin] + formaldehyde + NH4(+) + 2 H(+). Functionally, methylamine dehydrogenase carries out the oxidation of methylamine. Electrons are passed from methylamine dehydrogenase to amicyanin. In Methylophilus methylotrophus (Bacterium W3A1), this protein is Methylamine dehydrogenase heavy chain (mauB).